The following is a 132-amino-acid chain: MPVLTRSRQPRKQRRALYRAPLHARQKLVSATLSPELREKYGVRSLPVRKGDKVRVMRGDFKGHEGKVVKVDLRRLRIYIDGVTVTKADGTPVFRPIHPSNVMIVELDLSDEYRKKMIERRAAGRRGGGNSE.

The protein belongs to the universal ribosomal protein uL24 family. Part of the 50S ribosomal subunit.

Its function is as follows. One of two assembly initiator proteins, it binds directly to the 5'-end of the 23S rRNA, where it nucleates assembly of the 50S subunit. Located at the polypeptide exit tunnel on the outside of the subunit. The protein is Large ribosomal subunit protein uL24 of Aeropyrum pernix (strain ATCC 700893 / DSM 11879 / JCM 9820 / NBRC 100138 / K1).